We begin with the raw amino-acid sequence, 204 residues long: Putative F-box protein L168 (204 aa).

In terms of domain architecture, F-box spans 1-46 (MNLCDLFDEIIIGIIDELSDRDKIKFMTTCSRFYYFIDKTKYFDIY). A disordered region spans residues 161-184 (NETNKITNNHTNKKINNNKKHQNN). The span at 171–183 (TNKKINNNKKHQN) shows a compositional bias: basic residues.

This chain is Putative F-box protein L168, found in Acanthamoeba polyphaga (Amoeba).